The chain runs to 240 residues: Aspartate/glutamate leucyltransferase (240 aa).

It belongs to the R-transferase family. Bpt subfamily.

The protein resides in the cytoplasm. It catalyses the reaction N-terminal L-glutamyl-[protein] + L-leucyl-tRNA(Leu) = N-terminal L-leucyl-L-glutamyl-[protein] + tRNA(Leu) + H(+). It carries out the reaction N-terminal L-aspartyl-[protein] + L-leucyl-tRNA(Leu) = N-terminal L-leucyl-L-aspartyl-[protein] + tRNA(Leu) + H(+). Its function is as follows. Functions in the N-end rule pathway of protein degradation where it conjugates Leu from its aminoacyl-tRNA to the N-termini of proteins containing an N-terminal aspartate or glutamate. The chain is Aspartate/glutamate leucyltransferase from Bordetella avium (strain 197N).